The chain runs to 535 residues: MDVKAEAPNGPAPVKNENQNQPKPQRENMNMNKNQNQNQNNNMGGGGGPNKRNNMNMNKNFQNRGGKGGPGMGPRGPMKNEDFIVNSKLKNLAGPTHDLPELVCEEIKFSGRNRLYIGNLTSDVTEEELKELFSPYGEISEAFINAEKNFAFLKIDYRANAERAKKDLDGRMRKNKPIRIRFAPNATTIRVKNLTPFVSNELLFKSFEVFGQVERAVIIVDDRGKTTGEGIVEFARKSGAMSALKYCSEKCYFLTSSLRPCVVETFDHIDETDGFPEKSLMRKSNDYYKARQNGPRFAEMGSFEHEFGTKWKQMYDMYKQKHDALKREMQLEEEKLEAQMEYAKFEHETESLREQLRKREQDRDRQKKEWEDRERQADESRIRDEQQMRRQQDDMQMRMQRQDEEMRRRQQENSLFMQAQQLSNMLDQQEMNHQGGGGGGGNGGNGNNQGGGGNQGGGRRNYNNDRNNDRNQNFDMMNQGGGNHGGNQYQGNQHYQGNQDQGNRFDGPPQRGNVRPWNNNDRGHRDDFQNKRRRY.

The interval Met1–Asn80 is disordered. Low complexity-rich tracts occupy residues Glu27–Asn42 and Asn50–Arg64. Residues Gly65–Pro74 are compositionally biased toward gly residues. 2 consecutive RRM domains span residues Asn113 to Asn185 and Thr187 to His268. Disordered regions lie at residues Glu346 to Gln411 and Gln429 to Tyr535. Over residues Gln434–Arg459 the composition is skewed to gly residues. Positions Gly486–Gly502 are enriched in low complexity. The segment covering Asp521 to Tyr535 has biased composition (basic and acidic residues).

It is found in the cytoplasm. The protein resides in the cytoskeleton. It localises to the nucleus. Component of nuclear connecting fibers associated with the transport of ribonucleoprotein particles from either the chromosome to the nuclear pore complex or their transient retention in the nucleoplasm. This Chironomus tentans (Midge) protein is Hrp65 protein (HRP65).